Reading from the N-terminus, the 1217-residue chain is DNA-directed RNA polymerase subunit beta' (1217 aa).

Cys-60, Cys-62, Cys-75, and Cys-78 together coordinate Zn(2+). Positions 449, 451, and 453 each coordinate Mg(2+). 4 residues coordinate Zn(2+): Cys-821, Cys-895, Cys-902, and Cys-905.

It belongs to the RNA polymerase beta' chain family. In terms of assembly, the RNAP catalytic core consists of 2 alpha, 1 beta, 1 beta' and 1 omega subunit. When a sigma factor is associated with the core the holoenzyme is formed, which can initiate transcription. It depends on Mg(2+) as a cofactor. Zn(2+) serves as cofactor.

It catalyses the reaction RNA(n) + a ribonucleoside 5'-triphosphate = RNA(n+1) + diphosphate. In terms of biological role, DNA-dependent RNA polymerase catalyzes the transcription of DNA into RNA using the four ribonucleoside triphosphates as substrates. In Lactobacillus acidophilus (strain ATCC 700396 / NCK56 / N2 / NCFM), this protein is DNA-directed RNA polymerase subunit beta'.